The sequence spans 254 residues: Ornithine decarboxylase antizyme (254 aa).

This sequence belongs to the ODC antizyme family. In terms of assembly, interacts with ODC1 and thereby sterically blocks ODC homodimerization.

In terms of biological role, ornithine decarboxylase (ODC) antizyme protein that negatively regulates ODC activity and intracellular polyamine biosynthesis and uptake in response to increased intracellular polyamine levels. Binds to ODC monomers, inhibiting the assembly of the functional ODC homodimer, and targets the monomers for ubiquitin-independent proteolytic destruction by the 26S proteasome. Required for cellular differentiation in neuronal and myogenic lineages during embryonic development. This chain is Ornithine decarboxylase antizyme (Oda), found in Drosophila melanogaster (Fruit fly).